The sequence spans 397 residues: Elongation factor Tu (397 aa).

The tr-type G domain occupies 10 to 206; the sequence is KPHVNVGTIG…TMDTYFPQPE (197 aa). The interval 19 to 26 is G1; it reads GHVDHGKT. Residue 19–26 coordinates GTP; the sequence is GHVDHGKT. Residue T26 participates in Mg(2+) binding. Positions 60–64 are G2; that stretch reads GITIA. Residues 81 to 84 are G3; sequence DCPG. Residues 81–85 and 136–139 each bind GTP; these read DCPGH and NKAD. The G4 stretch occupies residues 136-139; it reads NKAD. The segment at 174–176 is G5; the sequence is SAL.

Belongs to the TRAFAC class translation factor GTPase superfamily. Classic translation factor GTPase family. EF-Tu/EF-1A subfamily. In terms of assembly, monomer.

It localises to the cytoplasm. It carries out the reaction GTP + H2O = GDP + phosphate + H(+). In terms of biological role, GTP hydrolase that promotes the GTP-dependent binding of aminoacyl-tRNA to the A-site of ribosomes during protein biosynthesis. This chain is Elongation factor Tu, found in Coxiella burnetii (strain Dugway 5J108-111).